A 674-amino-acid chain; its full sequence is Protein asunder (674 aa).

A coiled-coil region spans residues 516 to 538 (HKAKDQYRLLYRELEQLIQLNAS). The tract at residues 560 to 579 (PSKSEAGTANLRSFTESPLS) is disordered. Residues 564–577 (EAGTANLRSFTESP) are compositionally biased toward polar residues. Positions 601–607 (LKASKRR) match the Nuclear localization signal (NLS) motif.

This sequence belongs to the Integrator subunit 13 family. As to quaternary structure, belongs to the multiprotein complex Integrator, at least composed of IntS1, IntS2, IntS3, IntS4, omd/IntS5, IntS6, defl/IntS7, IntS8, IntS9, IntS10, IntS11, IntS12, asun/IntS13, IntS14 and IntS15. The core complex associates with protein phosphatase 2A subunits mts/PP2A and Pp2A-29B, to form the Integrator-PP2A (INTAC) complex. In terms of processing, phosphorylated.

The protein resides in the nucleus. Its subcellular location is the cytoplasm. The protein localises to the perinuclear region. In terms of biological role, component of the integrator complex, a multiprotein complex that terminates RNA polymerase II (Pol II) transcription in the promoter-proximal region of genes. The integrator complex provides a quality checkpoint during transcription elongation by driving premature transcription termination of transcripts that are unfavorably configured for transcriptional elongation: the complex terminates transcription by (1) catalyzing dephosphorylation of the C-terminal domain (CTD) of Pol II subunit Polr2A/Rbp1 and Spt5, and (2) degrading the exiting nascent RNA transcript via endonuclease activity. The integrator complex is also involved in the 3'-end processing of the U7 snRNA, and also the spliceosomal snRNAs U1, U2, U4 and U5. The protein is Protein asunder (asun) of Drosophila pseudoobscura pseudoobscura (Fruit fly).